A 721-amino-acid polypeptide reads, in one-letter code: Catalase-peroxidase 1 (721 aa).

The segment at residues 98-223 (WHAAGSYRVA…LAAVQMGLIY (126 aa)) is a cross-link (tryptophyl-tyrosyl-methioninium (Trp-Tyr) (with M-249)). His99 acts as the Proton acceptor in catalysis. The tryptophyl-tyrosyl-methioninium (Tyr-Met) (with W-98) cross-link spans 223–249 (YVNPEGVNGQPDPLRTAQDVRVTFGRM). A heme b-binding site is contributed by His264.

The protein belongs to the peroxidase family. Peroxidase/catalase subfamily. In terms of assembly, homodimer or homotetramer. Heme b is required as a cofactor. Formation of the three residue Trp-Tyr-Met cross-link is important for the catalase, but not the peroxidase activity of the enzyme.

It catalyses the reaction H2O2 + AH2 = A + 2 H2O. The enzyme catalyses 2 H2O2 = O2 + 2 H2O. In terms of biological role, bifunctional enzyme with both catalase and broad-spectrum peroxidase activity. The chain is Catalase-peroxidase 1 from Legionella pneumophila (strain Corby).